The following is a 65-amino-acid chain: Large ribosomal subunit protein bL35 (65 aa).

The disordered stretch occupies residues 1-22; it reads MPKLKTKSGAAKRFKKTGKGGF.

This sequence belongs to the bacterial ribosomal protein bL35 family.

The protein is Large ribosomal subunit protein bL35 of Francisella philomiragia subsp. philomiragia (strain ATCC 25017 / CCUG 19701 / FSC 153 / O#319-036).